Reading from the N-terminus, the 555-residue chain is Formate--tetrahydrofolate ligase (555 aa).

64 to 71 (TKAGIGKT) is an ATP binding site.

The protein belongs to the formate--tetrahydrofolate ligase family.

It carries out the reaction (6S)-5,6,7,8-tetrahydrofolate + formate + ATP = (6R)-10-formyltetrahydrofolate + ADP + phosphate. It participates in one-carbon metabolism; tetrahydrofolate interconversion. The chain is Formate--tetrahydrofolate ligase from Phocaeicola vulgatus (strain ATCC 8482 / DSM 1447 / JCM 5826 / CCUG 4940 / NBRC 14291 / NCTC 11154) (Bacteroides vulgatus).